The following is a 121-amino-acid chain: Large ribosomal subunit protein bL12 (121 aa).

The protein belongs to the bacterial ribosomal protein bL12 family. As to quaternary structure, homodimer. Part of the ribosomal stalk of the 50S ribosomal subunit. Forms a multimeric L10(L12)X complex, where L10 forms an elongated spine to which 2 to 4 L12 dimers bind in a sequential fashion. Binds GTP-bound translation factors.

Its function is as follows. Forms part of the ribosomal stalk which helps the ribosome interact with GTP-bound translation factors. Is thus essential for accurate translation. This is Large ribosomal subunit protein bL12 from Shewanella frigidimarina (strain NCIMB 400).